A 30-amino-acid chain; its full sequence is Kalata-B17 (30 aa).

Positions 1–30 (GIPCAESCVYIPCTITALLGCKCKDQVCYN) form a cross-link, cyclopeptide (Gly-Asn). Intrachain disulfides connect Cys-4-Cys-21, Cys-8-Cys-23, and Cys-13-Cys-28.

In terms of processing, this is a cyclic peptide.

Functionally, probably participates in a plant defense mechanism. This is Kalata-B17 from Oldenlandia affinis.